Here is a 297-residue protein sequence, read N- to C-terminus: N-acetylneuraminate lyase (297 aa).

Ser-47 and Thr-48 together coordinate aceneuramate. The active-site Proton donor is Tyr-137. The active-site Schiff-base intermediate with substrate is Lys-165. Aceneuramate is bound by residues Thr-167, Gly-189, Asp-191, Glu-192, and Ser-208.

This sequence belongs to the DapA family. NanA subfamily. In terms of assembly, homotetramer.

It localises to the cytoplasm. The enzyme catalyses aceneuramate = aldehydo-N-acetyl-D-mannosamine + pyruvate. Its pathway is amino-sugar metabolism; N-acetylneuraminate degradation; D-fructose 6-phosphate from N-acetylneuraminate: step 1/5. Functionally, catalyzes the reversible aldol cleavage of N-acetylneuraminic acid (sialic acid; Neu5Ac) to form pyruvate and N-acetylmannosamine (ManNAc) via a Schiff base intermediate. The protein is N-acetylneuraminate lyase of Salmonella choleraesuis (strain SC-B67).